A 151-amino-acid chain; its full sequence is UPF0756 membrane protein lhv_0995 (151 aa).

5 helical membrane passes run 4–24, 25–45, 52–72, 78–98, and 115–135; these read WLFL…SLII, ATGV…LPVI, WGVT…QIGF, TFKS…AILS, and LVLG…GPVI.

This sequence belongs to the UPF0756 family.

The protein resides in the cell membrane. The sequence is that of UPF0756 membrane protein lhv_0995 from Lactobacillus helveticus (strain DPC 4571).